The chain runs to 486 residues: MKFVIKLFPEIMIKSESVRKRFVKILTGNIRNVLNKYDDGVAVVKHWDYIEVRSKNEENRAILIDVLGRIPGIHHFLEVDEKPFTDMHDIFEQTLADVGASLENKTFCVRVKRKGKHEFSSLDVERYVGGGLNQAIETAKVKLSNPDVTVRIDIENDHMMLIKARHEGIGGYPIGTQEDVLSLISGGFDSGVSSYMFIRRGSRVHYCFFNLGGAAHEIGVKQMAYHIWNRYSGSHKVRFVAINFENVVGEILEKIDNGQMGVVLKRMMVRAASKVAERFGIQAIVTGEALGQVSSQTLTNLRLIDEAASALVLRPLITHDKEAIIAMAKQIGTDDIAKSMPEFCGVISKNPTVKAIKEKIEKEELNFNFDVLESAVQNAQYLDIRQIAEQTEKDVVKVDTVSVLSANDVILDIRSPEEHDERPFELAGHEVKHLPFYKLSSQFGDLDQSKNYVLYCERGVMSKLQALYLKENGFANVRVFAHGNIN.

The THUMP domain occupies 61 to 165 (AILIDVLGRI…NDHMMLIKAR (105 aa)). Residues 183–184 (LI), lysine 265, glycine 287, and glutamine 296 each bind ATP. Cysteine 344 and cysteine 456 are joined by a disulfide. Residues 404-481 (LSANDVILDI…NGFANVRVFA (78 aa)) form the Rhodanese domain. Cysteine 456 (cysteine persulfide intermediate) is an active-site residue.

Belongs to the ThiI family.

The protein resides in the cytoplasm. The catalysed reaction is [ThiI sulfur-carrier protein]-S-sulfanyl-L-cysteine + a uridine in tRNA + 2 reduced [2Fe-2S]-[ferredoxin] + ATP + H(+) = [ThiI sulfur-carrier protein]-L-cysteine + a 4-thiouridine in tRNA + 2 oxidized [2Fe-2S]-[ferredoxin] + AMP + diphosphate. It carries out the reaction [ThiS sulfur-carrier protein]-C-terminal Gly-Gly-AMP + S-sulfanyl-L-cysteinyl-[cysteine desulfurase] + AH2 = [ThiS sulfur-carrier protein]-C-terminal-Gly-aminoethanethioate + L-cysteinyl-[cysteine desulfurase] + A + AMP + 2 H(+). The protein operates within cofactor biosynthesis; thiamine diphosphate biosynthesis. Catalyzes the ATP-dependent transfer of a sulfur to tRNA to produce 4-thiouridine in position 8 of tRNAs, which functions as a near-UV photosensor. Also catalyzes the transfer of sulfur to the sulfur carrier protein ThiS, forming ThiS-thiocarboxylate. This is a step in the synthesis of thiazole, in the thiamine biosynthesis pathway. The sulfur is donated as persulfide by IscS. This is tRNA sulfurtransferase from Mannheimia succiniciproducens (strain KCTC 0769BP / MBEL55E).